Consider the following 657-residue polypeptide: Glycogen debranching enzyme (657 aa).

The Nucleophile role is filled by D336. E371 serves as the catalytic Proton donor. Residues 460 to 481 (ANGEENRDGTNNNYSNNHGKEG) are disordered.

This sequence belongs to the glycosyl hydrolase 13 family.

The catalysed reaction is Hydrolysis of (1-&gt;6)-alpha-D-glucosidic linkages to branches with degrees of polymerization of three or four glucose residues in limit dextrin.. Its pathway is glycan degradation; glycogen degradation. Functionally, removes maltotriose and maltotetraose chains that are attached by 1,6-alpha-linkage to the limit dextrin main chain, generating a debranched limit dextrin. The protein is Glycogen debranching enzyme of Escherichia coli O157:H7.